Consider the following 1319-residue polypeptide: MQAQQLPYEFFSEENAPKWRGLLVPALKKVQGQVHPTLESNDDALQYVEELILQLLNMLCQAQPRSASDVEERVQKSFPHPIDKWAIADAQSAIEKRKRRNPLSLPAERIHHLLREVLGYKIDHQVSVYIVAVLEYISADILKLVGNYVRNIRHYEITKQDIKVAMCADKVLMDMFHQDVEDINILSLTDEEPSTSGEQTYYDLVKAFMAEIRQYIRELNLIIKVFREPFVSNSKLFSSNDVENIFSRIVDIHELSVKLLGHIEDTVEMTDEGSPHPLVGSCFEDLAEELAFDPYESYARDILRPGFHGHFLSQLSKPGAALYLQSIGEGFKEAVQYVLPRLLLAPVYHCLHYFELLKQLEEKSEDQEDKECMKQAITALLNVQSGMEKICSKSLAKRRLSESACRFYSQQMKGKQLAIKKMNEIQKNIDGWEGKDIGQCCNEFIMEGTLTRVGAKHERHIFLFDGLMICCKSNHGQPRLPGASSAEYRLKEKFFMRKVQINDKDDTSEYKHAFEIILKDGNSVIFSAKSAEEKNNWMAALISLQYRSTLERMLDVTVLQEEKEEQMRLPSAEVYRFAEPDSEENILFEENVQPKAGIPIIKAGTVLKLIERLTYHMYADPNFVRTFLTTYRSFCRPQELLSLLIERFEIPEPEPTEADRIAIENGDQPLSAELKRFRKEYIQPVQLRVLNVCRHWVEHHFYDFERDADLLQRMEEFIGTVRGKAMKKWVESITKIIQRKKIARDNGPGHNITFQSSPPTVEWHISRPGHIETFDLLTLHPIEIARQLTLLESDLYRAVQPSELVGSVWTKEDKEINSPNLLKMIRHTTNLTLWFEKCIVETENLEERVAVVSRIIEILQVFQELNNFNGVLEVVSAMNSSPVYRLDHTFEQIPSRQKKILEEAHELSEDHYKKYLAKLRSINPPCVPFFGIYLTNILKTEEGNPEVLRRHGKELINFSKRRRVAEITGEIQQYQNQPYCLRVEPDIKRFFENLNPMGNSMEKEFTDYLFNKSLEIEPRHPKPLPRFPKKYSYPLKSPGVRPSNPRPGTMRHPTPLQQEPRKISYSRIPESETESTASAPNSPRTPLTPPPASGTSSNTDVCSVFDSDHSASPFHSRSASVSSISLSKGTDEVPVPPPVPPRRRPESAPAESSPSKIMSKHLDSPPAIPPRQPTSKAYSPRYSISDRTSISDPPESPPLLPPREPVRTPDVFSSSPLHLQPPPLGKKSDHGNAFFPNSPSPFTPPPPQTPSPHGTRRHLPSPPLTQEMDLHSIAGPPVPPRQSTSQLIPKLPPKTYKREHTHPSMHRDGPPLLENAHSS.

The DH domain occupies 200-390; it reads TYYDLVKAFM…LNVQSGMEKI (191 aa). Positions 444–548 constitute a PH domain; the sequence is FIMEGTLTRV…AALISLQYRS (105 aa). An N-terminal Ras-GEF domain is found at 597-741; sequence GIPIIKAGTV…SITKIIQRKK (145 aa). One can recognise a Ras-GEF domain in the interval 780 to 1019; the sequence is HPIEIARQLT…FNKSLEIEPR (240 aa). A disordered region spans residues 1019 to 1101; sequence RHPKPLPRFP…ASGTSSNTDV (83 aa). Serine 1078 and serine 1082 each carry phosphoserine. Phosphoserine; by RPS6KA3 occurs at positions 1120 and 1147. The interval 1121-1319 is disordered; the sequence is VSSISLSKGT…PPLLENAHSS (199 aa). Residues serine 1164, serine 1196, and serine 1215 each carry the phosphoserine modification. The span at 1194–1203 shows a compositional bias: pro residues; the sequence is PESPPLLPPR. Pro residues predominate over residues 1238 to 1250; it reads SPSPFTPPPPQTP. At serine 1261 the chain carries Phosphoserine. Residues 1296–1309 are compositionally biased toward basic and acidic residues; the sequence is YKREHTHPSMHRDG.

Interacts (via C-terminus) with GRB2 (via SH3 domain). Forms a complex with phosphorylated MUC1 and GRB2 (via its SH3 domains). Interacts with phosphorylated LAT2. Interacts with NCK1 and NCK2. Part of a complex consisting of ABI1, EPS8 and SOS1. Interacts (Ser-1120 and Ser-1147 phosphorylated form) with YWHAB and YWHAE. Phosphorylation at Ser-1120 and Ser-1147 by RPS6KA3 create YWHAB and YWHAE binding sites and which contribute to the negative regulation of EGF-induced MAPK1/3 phosphorylation. In terms of tissue distribution, expressed in most embryonic and adult tissues.

Functionally, promotes the exchange of Ras-bound GDP by GTP. Probably by promoting Ras activation, regulates phosphorylation of MAP kinase MAPK3 in response to EGF. Catalytic component of a trimeric complex that participates in transduction of signals from Ras to Rac by promoting the Rac-specific guanine nucleotide exchange factor (GEF) activity. This Mus musculus (Mouse) protein is Son of sevenless homolog 1 (Sos1).